The chain runs to 105 residues: Large ribosomal subunit protein uL24 (105 aa).

It belongs to the universal ribosomal protein uL24 family. Part of the 50S ribosomal subunit.

One of two assembly initiator proteins, it binds directly to the 5'-end of the 23S rRNA, where it nucleates assembly of the 50S subunit. Functionally, one of the proteins that surrounds the polypeptide exit tunnel on the outside of the subunit. This is Large ribosomal subunit protein uL24 from Mycobacterium tuberculosis (strain CDC 1551 / Oshkosh).